A 250-amino-acid polypeptide reads, in one-letter code: Probable replication-associated protein repA2 (250 aa).

The protein belongs to the IncFII RepA family.

Its function is as follows. This protein is essential for plasmid replication; it is involved in copy control functions. The chain is Probable replication-associated protein repA2 (repA2) from Buchnera aphidicola subsp. Acyrthosiphon pisum (strain APS) (Acyrthosiphon pisum symbiotic bacterium).